We begin with the raw amino-acid sequence, 490 residues long: Probable cytosol aminopeptidase (490 aa).

Mn(2+) is bound by residues K255 and D260. K267 is an active-site residue. 3 residues coordinate Mn(2+): D278, D337, and E339. R341 is a catalytic residue.

It belongs to the peptidase M17 family. It depends on Mn(2+) as a cofactor.

It localises to the cytoplasm. It catalyses the reaction Release of an N-terminal amino acid, Xaa-|-Yaa-, in which Xaa is preferably Leu, but may be other amino acids including Pro although not Arg or Lys, and Yaa may be Pro. Amino acid amides and methyl esters are also readily hydrolyzed, but rates on arylamides are exceedingly low.. It carries out the reaction Release of an N-terminal amino acid, preferentially leucine, but not glutamic or aspartic acids.. Its function is as follows. Presumably involved in the processing and regular turnover of intracellular proteins. Catalyzes the removal of unsubstituted N-terminal amino acids from various peptides. The polypeptide is Probable cytosol aminopeptidase (Gluconobacter oxydans (strain 621H) (Gluconobacter suboxydans)).